The following is a 276-amino-acid chain: MLQQDSNDDTEDVSLFDAEEETTNRPRKAKIRHPVASFFHLFFRVSAIIVCLLCELLSSSFITCMVTIILLLSCDFWAVKNVTGRLMVGLRWWNHIDEDGKSHWVFESRKESSQENKTVSEAESRIFWLGLIACSVLWVIFAFSALFSFTVKWLRRSRHIAQTGLKVLGSRDPPASAFQSAGITGVSRCPGHPSRKFHQVDINSFTRITDRALYWKPAPRLSSPPLRAAPGNCQQMAPARLFLSLRLWAWRGGGESPNSRGTGEPGPKFHLASGMH.

M1 is modified (N-acetylmethionine). Residues M1–E21 are disordered. 2 helical membrane passes run L52–L72 and I126–L146. Residues G254–H276 are disordered.

This sequence belongs to the TVP23 family.

It localises to the membrane. This chain is Golgi apparatus membrane protein TVP23 homolog C (TVP23C), found in Homo sapiens (Human).